The sequence spans 357 residues: 3'-hydroxy-N-methyl-(S)-coclaurine 4'-O-methyltransferase 2 (357 aa).

Aspartate 226 provides a ligand contact to S-adenosyl-L-methionine. Histidine 264 (proton acceptor) is an active-site residue.

This sequence belongs to the class I-like SAM-binding methyltransferase superfamily. Cation-independent O-methyltransferase family. COMT subfamily. Homodimer. Expressed in roots, stems, leaves and flowers.

It carries out the reaction (S)-3'-hydroxy-N-methylcoclaurine + S-adenosyl-L-methionine = (S)-reticuline + S-adenosyl-L-homocysteine + H(+). Its pathway is alkaloid biosynthesis; (S)-reticuline biosynthesis; (S)-reticuline from (S)-norcoclaurine: step 4/4. In terms of biological role, involved in the biosynthesis of benzylisoquinoline alkaloids. Catalyzes the transfer of the methyl group to the 4'-hydroxyl group of 3'-hydroxy-N-methylcoclaurine to form reticuline. Can also use laudanosoline and, with a lower activity, 6-O-methylnorlaudanosoline and norlaudanosoline as substrates. Also involved in the papaverine biosynthesis. This is 3'-hydroxy-N-methyl-(S)-coclaurine 4'-O-methyltransferase 2 from Papaver somniferum (Opium poppy).